A 78-amino-acid chain; its full sequence is Large ribosomal subunit protein bL28 (78 aa).

Belongs to the bacterial ribosomal protein bL28 family.

The protein is Large ribosomal subunit protein bL28 of Pseudoalteromonas atlantica (strain T6c / ATCC BAA-1087).